The sequence spans 169 residues: Photosystem I assembly protein Ycf3 (169 aa).

3 TPR repeats span residues 35–68 (AFSYYRDGMSAQSEGEYAEALQNYYEAMRLEIDP), 72–105 (SYILYNIGLIHTSNGQHTKALEYYLQALERNPAL), and 120–153 (GEQAIQQGDPENAEAWFDQAADYWKQGIALAPSN).

It belongs to the Ycf3 family.

Its subcellular location is the plastid. The protein localises to the chloroplast thylakoid membrane. Essential for the assembly of the photosystem I (PSI) complex. May act as a chaperone-like factor to guide the assembly of the PSI subunits. The protein is Photosystem I assembly protein Ycf3 of Chaetosphaeridium globosum (Charophycean green alga).